We begin with the raw amino-acid sequence, 394 residues long: Mitogen-activated protein kinase 2 (394 aa).

Positions 1 to 31 are enriched in gly residues; it reads MRMEGGGGGGHGHHGGGGGGHGHHGGIGGGE. The interval 1-33 is disordered; sequence MRMEGGGGGGHGHHGGGGGGHGHHGGIGGGEAQ. Positions 61 to 347 constitute a Protein kinase domain; that stretch reads VPPIRPVGRG…VDEALCHPYL (287 aa). Residues 67–75 and Lys90 contribute to the ATP site; that span reads VGRGACGII. Catalysis depends on Asp187, which acts as the Proton acceptor. The residue at position 221 (Tyr221) is a Phosphotyrosine.

The protein belongs to the protein kinase superfamily. CMGC Ser/Thr protein kinase family. MAP kinase subfamily. Post-translationally, the phosphorylation on Tyr-221 activates the enzyme. A conserved Thr, which must also be phosphorylated to activate the enzyme in closely related sequences, is replaced by Met-219 in this sequence.

The enzyme catalyses L-seryl-[protein] + ATP = O-phospho-L-seryl-[protein] + ADP + H(+). The catalysed reaction is L-threonyl-[protein] + ATP = O-phospho-L-threonyl-[protein] + ADP + H(+). In Oryza sativa subsp. japonica (Rice), this protein is Mitogen-activated protein kinase 2 (MPK2).